Consider the following 429-residue polypeptide: Glutamate-1-semialdehyde 2,1-aminomutase (429 aa).

The residue at position 265 (K265) is an N6-(pyridoxal phosphate)lysine.

It belongs to the class-III pyridoxal-phosphate-dependent aminotransferase family. HemL subfamily. In terms of assembly, homodimer. Requires pyridoxal 5'-phosphate as cofactor.

It is found in the cytoplasm. It carries out the reaction (S)-4-amino-5-oxopentanoate = 5-aminolevulinate. It functions in the pathway porphyrin-containing compound metabolism; protoporphyrin-IX biosynthesis; 5-aminolevulinate from L-glutamyl-tRNA(Glu): step 2/2. The chain is Glutamate-1-semialdehyde 2,1-aminomutase from Shewanella pealeana (strain ATCC 700345 / ANG-SQ1).